The sequence spans 63 residues: MKAKELREKSIEELNTELLNLLREQFNLRMQAASGQLQQSHLLKQVRRDVARVKTLLNEKAGA.

The protein belongs to the universal ribosomal protein uL29 family.

The polypeptide is Large ribosomal subunit protein uL29 (Shigella flexneri).